The following is a 693-amino-acid chain: Phenoloxidase subunit 2 (693 aa).

Residues 1-51 constitute a propeptide that is removed on maturation; that stretch reads MADVFESLELLFDRPNEPLITPKGENNSVFQLTEQFLTEDYANNGIELNNR. 2 N-linked (GlcNAc...) asparagine glycosylation sites follow: N26 and N64. H213, H217, and H243 together coordinate Cu cation. The active-site Proton acceptor is the E351. Positions 366, 370, and 406 each coordinate Cu cation. 2 N-linked (GlcNAc...) asparagine glycosylation sites follow: N462 and N494. Cystine bridges form between C583–C627 and C585–C634. N680 is a glycosylation site (N-linked (GlcNAc...) asparagine).

Heterodimer. Cu(2+) is required as a cofactor. In terms of processing, the N-terminus is blocked. As to expression, synthesized by hemocytes and released into the hemolymph plasma.

The protein localises to the secreted. It carries out the reaction 2 L-dopa + O2 = 2 L-dopaquinone + 2 H2O. The catalysed reaction is L-tyrosine + O2 = L-dopaquinone + H2O. Functionally, this is a copper-containing oxidase that functions in the formation of pigments such as melanins and other polyphenolic compounds. Catalyzes the rate-limiting conversions of tyrosine to DOPA, DOPA to DOPA-quinone and possibly 5,6 dihydroxyindole to indole-5'6 quinone. This is Phenoloxidase subunit 2 from Bombyx mori (Silk moth).